A 171-amino-acid chain; its full sequence is uncharacterized protein (171 aa).

2 disordered regions span residues 68–112 and 152–171; these read NKNN…DQPY and LPEKAKRGSDDEDDMFSIKN. Residues 161–171 show a composition bias toward acidic residues; sequence DDEDDMFSIKN.

It belongs to the asfivirus H171R family.

It is found in the virion. This is an uncharacterized protein from African swine fever virus (strain Badajoz 1971 Vero-adapted) (Ba71V).